The primary structure comprises 196 residues: ATP-dependent Clp protease proteolytic subunit (196 aa).

The active-site Nucleophile is Ser-98. His-123 is a catalytic residue.

Belongs to the peptidase S14 family. As to quaternary structure, fourteen ClpP subunits assemble into 2 heptameric rings which stack back to back to give a disk-like structure with a central cavity, resembling the structure of eukaryotic proteasomes.

It localises to the cytoplasm. The enzyme catalyses Hydrolysis of proteins to small peptides in the presence of ATP and magnesium. alpha-casein is the usual test substrate. In the absence of ATP, only oligopeptides shorter than five residues are hydrolyzed (such as succinyl-Leu-Tyr-|-NHMec, and Leu-Tyr-Leu-|-Tyr-Trp, in which cleavage of the -Tyr-|-Leu- and -Tyr-|-Trp bonds also occurs).. Its function is as follows. Cleaves peptides in various proteins in a process that requires ATP hydrolysis. Has a chymotrypsin-like activity. Plays a major role in the degradation of misfolded proteins. This is ATP-dependent Clp protease proteolytic subunit from Lactiplantibacillus plantarum (strain ATCC BAA-793 / NCIMB 8826 / WCFS1) (Lactobacillus plantarum).